An 802-amino-acid chain; its full sequence is Valine--tRNA ligase (802 aa).

Residues 45–55 carry the 'HIGH' region motif; that stretch reads PTISGQLHIGH. Residues 524-528 carry the 'KMSKS' region motif; the sequence is KMSKS. An ATP-binding site is contributed by lysine 527.

This sequence belongs to the class-I aminoacyl-tRNA synthetase family. ValS type 2 subfamily. In terms of assembly, monomer.

The protein localises to the cytoplasm. It carries out the reaction tRNA(Val) + L-valine + ATP = L-valyl-tRNA(Val) + AMP + diphosphate. Its function is as follows. Catalyzes the attachment of valine to tRNA(Val). As ValRS can inadvertently accommodate and process structurally similar amino acids such as threonine, to avoid such errors, it has a 'posttransfer' editing activity that hydrolyzes mischarged Thr-tRNA(Val) in a tRNA-dependent manner. The polypeptide is Valine--tRNA ligase (Ehrlichia canis (strain Jake)).